The primary structure comprises 314 residues: uncharacterized protein (314 aa).

Residues 39–146 are disordered; sequence QENVDSDSTD…SDYSSDESNS (108 aa). Residues 56 to 76 show a composition bias toward polar residues; sequence STKNVSRNIPKNIPKSISKNI. A compositionally biased stretch (low complexity) spans 88–131; the sequence is IPKNVSKNIPKNVPKNVSKNIPKNIPKNVPNKSRNKYSNYSEDS. Positions 132–141 are enriched in acidic residues; sequence NYSEDSDYSS.

This is an uncharacterized protein from Acanthamoeba polyphaga mimivirus (APMV).